The sequence spans 207 residues: Putative 3-methyladenine DNA glycosylase (207 aa).

Belongs to the DNA glycosylase MPG family.

The polypeptide is Putative 3-methyladenine DNA glycosylase (Listeria welshimeri serovar 6b (strain ATCC 35897 / DSM 20650 / CCUG 15529 / CIP 8149 / NCTC 11857 / SLCC 5334 / V8)).